Reading from the N-terminus, the 74-residue chain is Protein krueppel (74 aa).

4 consecutive C2H2-type zinc fingers follow at residues 1-4 (ERTH), 10-32 (FKCP…MRLH), 38-60 (YHCS…LRVH), and 66-74 (YTCEICKAK).

Belongs to the krueppel C2H2-type zinc-finger protein family.

It localises to the nucleus. Its function is as follows. Krueppel is a gap class segmentation protein. The polypeptide is Protein krueppel (Kr) (Bradysia coprophila (Dark-winged fungus gnat)).